Consider the following 95-residue polypeptide: Aspartyl/glutamyl-tRNA(Asn/Gln) amidotransferase subunit C (95 aa).

Belongs to the GatC family. In terms of assembly, heterotrimer of A, B and C subunits.

The catalysed reaction is L-glutamyl-tRNA(Gln) + L-glutamine + ATP + H2O = L-glutaminyl-tRNA(Gln) + L-glutamate + ADP + phosphate + H(+). It catalyses the reaction L-aspartyl-tRNA(Asn) + L-glutamine + ATP + H2O = L-asparaginyl-tRNA(Asn) + L-glutamate + ADP + phosphate + 2 H(+). In terms of biological role, allows the formation of correctly charged Asn-tRNA(Asn) or Gln-tRNA(Gln) through the transamidation of misacylated Asp-tRNA(Asn) or Glu-tRNA(Gln) in organisms which lack either or both of asparaginyl-tRNA or glutaminyl-tRNA synthetases. The reaction takes place in the presence of glutamine and ATP through an activated phospho-Asp-tRNA(Asn) or phospho-Glu-tRNA(Gln). This Hydrogenovibrio crunogenus (strain DSM 25203 / XCL-2) (Thiomicrospira crunogena) protein is Aspartyl/glutamyl-tRNA(Asn/Gln) amidotransferase subunit C.